The primary structure comprises 121 residues: D-ornithine 4,5-aminomutase subunit alpha (121 aa).

Heterotetramer of 2 alpha (OraS) and 2 beta (OraE) subunits.

It carries out the reaction D-ornithine = (2R,4S)-2,4-diaminopentanoate. With respect to regulation, increased activity in the presence of dithiothreitol (DTT) in vitro. Inhibited by 1 mM potassium phosphate and potassium chloride. Inhibited by L-alpha-ornithine, D,L-alpha-lysine, L-beta-lysine (50%-60%), L-alpha-lysine (26%) and by delta-amino-n-valeric acid to a lesser extent. Significant decrease in activity is observed in the presence of 0.2 mM p-chloromercuribenzoate, N-ethylmaleimide and also by 2 mM iodoacetate to a lesser extent but not inhibited by arsenite. Its function is as follows. Component of a complex that catalyzes the reversible migration of the omega amino group of D-ornithine to C-4 to form (2R,4S)-2,4-diaminopentanoic acid. The role of OraS remains obscure; however, it seems to be required for a correct folding of the OraE subunit. The complex is active only on D-ornithine and 2,4-diaminopentanoic acid and not active on L-ornithine, L-beta-lysine, L-alpha-lysine or D-alpha-lysine. The chain is D-ornithine 4,5-aminomutase subunit alpha (oraS) from Acetoanaerobium sticklandii (strain ATCC 12662 / DSM 519 / JCM 1433 / CCUG 9281 / NCIMB 10654 / HF) (Clostridium sticklandii).